The chain runs to 399 residues: MSQNLILVLNCGSSSIKFSVIDPKTEKKYISGIAECLKLKESSVKWKIDKSYHESSLNEYSDHNLALRFIVNEILQHKKDILKKIVGIGHRIVNGGIKCTKSTIIDEKILKNIKDSIPFAPLHNPAHLIGIYESFKIFPNLINKNVAVFDTAFHQTIPEDSYLYAIPYYFYKKYNIRRYGAHGISHSYVSKKASNILNIPIEKSNLITCHLGNGGSVSAILNGKCIDTSMGLTPLEGIVMGTRCGDIDPSIIFYLHEKLKISVKEIREIFSEKSGLLGLTNISSDFRYIEDNFLKNKIAKRAMKIYCNRLSKYIGAYITLLENKLDGIVFTGGIGENAYNMRELLINKLKILGFEINKEKNFKIRLGRSGIITNSNSIPALVIPTNEELVIAKESIIFT.

N10 lines the Mg(2+) pocket. Residue K17 participates in ATP binding. R91 provides a ligand contact to substrate. D150 acts as the Proton donor/acceptor in catalysis. ATP is bound by residues 210 to 214 (HLGNG), 285 to 287 (DFR), and 333 to 337 (GIGEN). E387 contacts Mg(2+).

The protein belongs to the acetokinase family. In terms of assembly, homodimer. The cofactor is Mg(2+). It depends on Mn(2+) as a cofactor.

It is found in the cytoplasm. It catalyses the reaction acetate + ATP = acetyl phosphate + ADP. It participates in metabolic intermediate biosynthesis; acetyl-CoA biosynthesis; acetyl-CoA from acetate: step 1/2. Catalyzes the formation of acetyl phosphate from acetate and ATP. Can also catalyze the reverse reaction. The chain is Acetate kinase from Wigglesworthia glossinidia brevipalpis.